Here is a 397-residue protein sequence, read N- to C-terminus: Tryptophan synthase beta chain (397 aa).

Lys-91 is subject to N6-(pyridoxal phosphate)lysine.

It belongs to the TrpB family. In terms of assembly, tetramer of two alpha and two beta chains. Pyridoxal 5'-phosphate is required as a cofactor.

It catalyses the reaction (1S,2R)-1-C-(indol-3-yl)glycerol 3-phosphate + L-serine = D-glyceraldehyde 3-phosphate + L-tryptophan + H2O. The protein operates within amino-acid biosynthesis; L-tryptophan biosynthesis; L-tryptophan from chorismate: step 5/5. The beta subunit is responsible for the synthesis of L-tryptophan from indole and L-serine. The sequence is that of Tryptophan synthase beta chain from Bacillus cereus (strain Q1).